Here is a 367-residue protein sequence, read N- to C-terminus: UDP-N-acetylenolpyruvoylglucosamine reductase (367 aa).

Positions 29-205 (VGPVAQRVIT…LEVEFKLDAS (177 aa)) constitute an FAD-binding PCMH-type domain. The active site involves arginine 177. Serine 260 acts as the Proton donor in catalysis. The active site involves glutamate 359.

It belongs to the MurB family. It depends on FAD as a cofactor.

Its subcellular location is the cytoplasm. It catalyses the reaction UDP-N-acetyl-alpha-D-muramate + NADP(+) = UDP-N-acetyl-3-O-(1-carboxyvinyl)-alpha-D-glucosamine + NADPH + H(+). Its pathway is cell wall biogenesis; peptidoglycan biosynthesis. Cell wall formation. The protein is UDP-N-acetylenolpyruvoylglucosamine reductase of Mycobacterium leprae (strain Br4923).